We begin with the raw amino-acid sequence, 1182 residues long: Intraflagellar transport protein 122 homolog (1182 aa).

WD repeat units follow at residues Lys10–Lys50, Gly51–Thr91, Asn93–His129, Ser131–Ile169, Gly174–Asp217, Pro219–Val258, Glu260–Tyr300, and Lys453–Gln492.

As to quaternary structure, component of the IFT complex A (IFT-A) complex. IFT-A complex is divided into a core subcomplex composed of IFT122:IFT140:WDR19 which is associated with TULP3 and a peripheral subcomplex composed of IFT43:WDR35:TTC21B. Interacts with IFT43:WDR35; the interaction connects the 2 IFT-A subcomplexes. Interacts with IFTAP; the interaction associates IFTAP with IFT-A complex.

It is found in the cell projection. Its subcellular location is the cilium. It localises to the cytoplasm. The protein resides in the cytoskeleton. The protein localises to the cilium basal body. In terms of biological role, as a component of the IFT complex A (IFT-A), a complex required for retrograde ciliary transport and entry into cilia of G protein-coupled receptors (GPCRs), it is required in ciliogenesis and ciliary protein trafficking. Involved in cilia formation during neuronal patterning. Acts as a negative regulator of Shh signaling. Required to recruit TULP3 to primary cilia. The polypeptide is Intraflagellar transport protein 122 homolog (Mus musculus (Mouse)).